Reading from the N-terminus, the 151-residue chain is Ribonuclease H (151 aa).

Residues 2-143 (SSNVIEIYAD…ADALANKGVD (142 aa)) enclose the RNase H type-1 domain. Mg(2+) contacts are provided by aspartate 11, glutamate 49, aspartate 71, and aspartate 135.

The protein belongs to the RNase H family. Monomer. Requires Mg(2+) as cofactor.

Its subcellular location is the cytoplasm. The enzyme catalyses Endonucleolytic cleavage to 5'-phosphomonoester.. In terms of biological role, endonuclease that specifically degrades the RNA of RNA-DNA hybrids. The sequence is that of Ribonuclease H from Methylobacillus flagellatus (strain ATCC 51484 / DSM 6875 / VKM B-1610 / KT).